Reading from the N-terminus, the 347-residue chain is Selenide, water dikinase (347 aa).

The active site involves Cys-17. Residues Lys-20 and 48-50 (TRD) contribute to the ATP site. Asp-51 contacts Mg(2+). ATP is bound by residues Asp-68, Asp-91, and 139-141 (GHS). A Mg(2+)-binding site is contributed by Asp-91. Asp-227 serves as a coordination point for Mg(2+).

It belongs to the selenophosphate synthase 1 family. Class I subfamily. As to quaternary structure, homodimer. It depends on Mg(2+) as a cofactor.

It carries out the reaction hydrogenselenide + ATP + H2O = selenophosphate + AMP + phosphate + 2 H(+). Synthesizes selenophosphate from selenide and ATP. The chain is Selenide, water dikinase from Cronobacter sakazakii (strain ATCC BAA-894) (Enterobacter sakazakii).